The sequence spans 226 residues: Thiamine-phosphate synthase (226 aa).

Residues 46-50 and aspartate 83 each bind 4-amino-2-methyl-5-(diphosphooxymethyl)pyrimidine; that span reads QFRDK. Mg(2+) is bound by residues aspartate 84 and aspartate 103. Residue serine 122 participates in 4-amino-2-methyl-5-(diphosphooxymethyl)pyrimidine binding. 149–151 lines the 2-[(2R,5Z)-2-carboxy-4-methylthiazol-5(2H)-ylidene]ethyl phosphate pocket; that stretch reads TQS. 4-amino-2-methyl-5-(diphosphooxymethyl)pyrimidine is bound at residue lysine 152. Residues glycine 181 and 201–202 each bind 2-[(2R,5Z)-2-carboxy-4-methylthiazol-5(2H)-ylidene]ethyl phosphate; that span reads IT.

Belongs to the thiamine-phosphate synthase family. The cofactor is Mg(2+).

The enzyme catalyses 2-[(2R,5Z)-2-carboxy-4-methylthiazol-5(2H)-ylidene]ethyl phosphate + 4-amino-2-methyl-5-(diphosphooxymethyl)pyrimidine + 2 H(+) = thiamine phosphate + CO2 + diphosphate. It carries out the reaction 2-(2-carboxy-4-methylthiazol-5-yl)ethyl phosphate + 4-amino-2-methyl-5-(diphosphooxymethyl)pyrimidine + 2 H(+) = thiamine phosphate + CO2 + diphosphate. The catalysed reaction is 4-methyl-5-(2-phosphooxyethyl)-thiazole + 4-amino-2-methyl-5-(diphosphooxymethyl)pyrimidine + H(+) = thiamine phosphate + diphosphate. It participates in cofactor biosynthesis; thiamine diphosphate biosynthesis; thiamine phosphate from 4-amino-2-methyl-5-diphosphomethylpyrimidine and 4-methyl-5-(2-phosphoethyl)-thiazole: step 1/1. Functionally, condenses 4-methyl-5-(beta-hydroxyethyl)thiazole monophosphate (THZ-P) and 2-methyl-4-amino-5-hydroxymethyl pyrimidine pyrophosphate (HMP-PP) to form thiamine monophosphate (TMP). This chain is Thiamine-phosphate synthase, found in Haemophilus influenzae (strain ATCC 51907 / DSM 11121 / KW20 / Rd).